The sequence spans 268 residues: MSGLSIENISMRFDLPNGSSVQALKNVSLHLKEGELMSVLGPSGCGKTTLLNIVAGFLAPTEGHIAMNGHKVHGPNAERGMVFQQGALFEWMNVRDNVSFGPRMKGQRASQYGSHVDHLLDVTGLGDFKDKAIYELSGGMQQRVALARCLANDPDVILMDEPLGALDALTREKMQGLVLKLWKETGKTIILITHSVEEALLLGERLLVMAPRPGRIHKEYRLPYADMGVNADLREVKKSEGYSQTREEILSMIWDMEEEIMGRTEAAQ.

The ABC transporter domain maps to 4 to 236 (LSIENISMRF…MGVNADLREV (233 aa)). 41-48 (GPSGCGKT) lines the ATP pocket.

Belongs to the ABC transporter superfamily. Taurine importer (TC 3.A.1.17.1) family. As to quaternary structure, the complex is composed of two ATP-binding proteins (TauB), two transmembrane proteins (TauC) and a solute-binding protein (TauA).

The protein localises to the cell inner membrane. It catalyses the reaction taurine(out) + ATP + H2O = taurine(in) + ADP + phosphate + H(+). Functionally, part of the ABC transporter complex TauABC involved in taurine import. Responsible for energy coupling to the transport system. The polypeptide is Taurine import ATP-binding protein TauB (Ruegeria pomeroyi (strain ATCC 700808 / DSM 15171 / DSS-3) (Silicibacter pomeroyi)).